A 372-amino-acid chain; its full sequence is Aminomethyltransferase (372 aa).

This sequence belongs to the GcvT family. As to quaternary structure, the glycine cleavage system is composed of four proteins: P, T, L and H.

It carries out the reaction N(6)-[(R)-S(8)-aminomethyldihydrolipoyl]-L-lysyl-[protein] + (6S)-5,6,7,8-tetrahydrofolate = N(6)-[(R)-dihydrolipoyl]-L-lysyl-[protein] + (6R)-5,10-methylene-5,6,7,8-tetrahydrofolate + NH4(+). Its function is as follows. The glycine cleavage system catalyzes the degradation of glycine. The protein is Aminomethyltransferase of Burkholderia multivorans (strain ATCC 17616 / 249).